A 350-amino-acid polypeptide reads, in one-letter code: Sulfate-binding protein (350 aa).

The signal sequence occupies residues 1 to 40 (MKTAWTRRSFLQSAALATATVITIAACGGNNQSSSGGSGQ).

Belongs to the prokaryotic sulfate-binding protein family.

The protein resides in the periplasm. Functionally, this protein specifically binds sulfate and is involved in its transmembrane transport. The polypeptide is Sulfate-binding protein (sbpA) (Synechococcus elongatus (strain ATCC 33912 / PCC 7942 / FACHB-805) (Anacystis nidulans R2)).